The chain runs to 225 residues: Phosphatidylserine decarboxylase proenzyme (225 aa).

Ser182 acts as the Schiff-base intermediate with substrate; via pyruvic acid in catalysis. A Pyruvic acid (Ser); by autocatalysis modification is found at Ser182.

It belongs to the phosphatidylserine decarboxylase family. PSD-A subfamily. Heterodimer of a large membrane-associated beta subunit and a small pyruvoyl-containing alpha subunit. Requires pyruvate as cofactor. Post-translationally, is synthesized initially as an inactive proenzyme. Formation of the active enzyme involves a self-maturation process in which the active site pyruvoyl group is generated from an internal serine residue via an autocatalytic post-translational modification. Two non-identical subunits are generated from the proenzyme in this reaction, and the pyruvate is formed at the N-terminus of the alpha chain, which is derived from the carboxyl end of the proenzyme. The post-translation cleavage follows an unusual pathway, termed non-hydrolytic serinolysis, in which the side chain hydroxyl group of the serine supplies its oxygen atom to form the C-terminus of the beta chain, while the remainder of the serine residue undergoes an oxidative deamination to produce ammonia and the pyruvoyl prosthetic group on the alpha chain.

Its subcellular location is the cell membrane. The catalysed reaction is a 1,2-diacyl-sn-glycero-3-phospho-L-serine + H(+) = a 1,2-diacyl-sn-glycero-3-phosphoethanolamine + CO2. The protein operates within phospholipid metabolism; phosphatidylethanolamine biosynthesis; phosphatidylethanolamine from CDP-diacylglycerol: step 2/2. Functionally, catalyzes the formation of phosphatidylethanolamine (PtdEtn) from phosphatidylserine (PtdSer). The sequence is that of Phosphatidylserine decarboxylase proenzyme from Neorickettsia sennetsu (strain ATCC VR-367 / Miyayama) (Ehrlichia sennetsu).